A 754-amino-acid polypeptide reads, in one-letter code: 5-methyltetrahydropteroyltriglutamate--homocysteine methyltransferase (754 aa).

Residues 17 to 20 and Lys-117 each bind 5-methyltetrahydropteroyltri-L-glutamate; that span reads RELK. Residues 431 to 433 and Glu-484 each bind L-homocysteine; that span reads IGS. Residues 431–433 and Glu-484 contribute to the L-methionine site; that span reads IGS. Residues 515–516 and Trp-561 each bind 5-methyltetrahydropteroyltri-L-glutamate; that span reads RC. Asp-599 is an L-homocysteine binding site. Asp-599 contributes to the L-methionine binding site. Glu-605 contributes to the 5-methyltetrahydropteroyltri-L-glutamate binding site. His-641, Cys-643, and Glu-665 together coordinate Zn(2+). The Proton donor role is filled by His-694. Cys-726 is a binding site for Zn(2+).

The protein belongs to the vitamin-B12 independent methionine synthase family. Requires Zn(2+) as cofactor.

It catalyses the reaction 5-methyltetrahydropteroyltri-L-glutamate + L-homocysteine = tetrahydropteroyltri-L-glutamate + L-methionine. Its pathway is amino-acid biosynthesis; L-methionine biosynthesis via de novo pathway; L-methionine from L-homocysteine (MetE route): step 1/1. Catalyzes the transfer of a methyl group from 5-methyltetrahydrofolate to homocysteine resulting in methionine formation. The protein is 5-methyltetrahydropteroyltriglutamate--homocysteine methyltransferase of Salmonella typhi.